The chain runs to 914 residues: TRPM8 channel-associated factor 2 (914 aa).

The Peptidase M60 domain occupies 541-840 (DAWMSTGLNL…TYLQLQEAFG (300 aa)).

Belongs to the TCAF family. Interacts with TRPM8 (via N-terminus and C-terminus domains); the interaction inhibits TRPM8 channel activity. Interacts with TRPV6.

It localises to the cell membrane. Negatively regulates the plasma membrane cation channel TRPM8 activity. Involved in the recruitment of TRPM8 to the cell surface. Promotes prostate cancer cell migration stimulation in a TRPM8-dependent manner. The polypeptide is TRPM8 channel-associated factor 2 (Bos taurus (Bovine)).